Consider the following 371-residue polypeptide: Putative glutamate--cysteine ligase 2 (371 aa).

The protein belongs to the glutamate--cysteine ligase type 2 family. YbdK subfamily.

It catalyses the reaction L-cysteine + L-glutamate + ATP = gamma-L-glutamyl-L-cysteine + ADP + phosphate + H(+). Functionally, ATP-dependent carboxylate-amine ligase which exhibits weak glutamate--cysteine ligase activity. The sequence is that of Putative glutamate--cysteine ligase 2 from Burkholderia thailandensis (strain ATCC 700388 / DSM 13276 / CCUG 48851 / CIP 106301 / E264).